The chain runs to 165 residues: NADPH-dependent 7-cyano-7-deazaguanine reductase (165 aa).

Residue Cys-56 is the Thioimide intermediate of the active site. Asp-63 (proton donor) is an active-site residue. Residues 78–80 (VES) and 97–98 (HE) contribute to the substrate site.

It belongs to the GTP cyclohydrolase I family. QueF type 1 subfamily.

Its subcellular location is the cytoplasm. The enzyme catalyses 7-aminomethyl-7-carbaguanine + 2 NADP(+) = 7-cyano-7-deazaguanine + 2 NADPH + 3 H(+). It participates in tRNA modification; tRNA-queuosine biosynthesis. Functionally, catalyzes the NADPH-dependent reduction of 7-cyano-7-deazaguanine (preQ0) to 7-aminomethyl-7-deazaguanine (preQ1). The chain is NADPH-dependent 7-cyano-7-deazaguanine reductase from Bacillus cereus (strain ATCC 14579 / DSM 31 / CCUG 7414 / JCM 2152 / NBRC 15305 / NCIMB 9373 / NCTC 2599 / NRRL B-3711).